The sequence spans 281 residues: MSIEFSKYQGLGNDFILIDNRSSHTPLVSPEQAIKMCDRHFGIGADGVIFVLPGTANTDYTMRIFNSDGSEPQMCGNGIRCLARFIAHLEGGETLGKTYQIDTLAGVISPRLEAQGQVKVDMGTPYLLAKEIPTTLGNSNDKVINHSLEVAGQTWLVTCVSMGNPHCITFVKDVWGIDLPTLGPQFEHHPGFPERTNTEFIEVVRRDYVKMRVWERGAGITLACGTGACASVVAGVLTNQCDRYCIVELPGGNLTIEWSEMDNRIYMTGPAELVFTGIYNL.

Substrate contacts are provided by N13 and N66. C75 functions as the Proton donor in the catalytic mechanism. Residues 76–77 (GN), N164, N197, and 215–216 (ER) contribute to the substrate site. C224 acts as the Proton acceptor in catalysis. 225-226 (GT) contributes to the substrate binding site.

It belongs to the diaminopimelate epimerase family. In terms of assembly, homodimer.

It is found in the cytoplasm. The catalysed reaction is (2S,6S)-2,6-diaminopimelate = meso-2,6-diaminopimelate. It functions in the pathway amino-acid biosynthesis; L-lysine biosynthesis via DAP pathway; DL-2,6-diaminopimelate from LL-2,6-diaminopimelate: step 1/1. Its function is as follows. Catalyzes the stereoinversion of LL-2,6-diaminopimelate (L,L-DAP) to meso-diaminopimelate (meso-DAP), a precursor of L-lysine and an essential component of the bacterial peptidoglycan. This Rippkaea orientalis (strain PCC 8801 / RF-1) (Cyanothece sp. (strain PCC 8801)) protein is Diaminopimelate epimerase.